The sequence spans 241 residues: DNA repair protein RecO (241 aa).

Belongs to the RecO family.

Its function is as follows. Involved in DNA repair and RecF pathway recombination. This is DNA repair protein RecO from Phocaeicola vulgatus (strain ATCC 8482 / DSM 1447 / JCM 5826 / CCUG 4940 / NBRC 14291 / NCTC 11154) (Bacteroides vulgatus).